Reading from the N-terminus, the 549-residue chain is Cation/acetate symporter ActP (549 aa).

The Periplasmic segment spans residues Met-1–Asn-32. Residues Trp-33–Lys-55 traverse the membrane as a helical segment. Residues Arg-56–Asn-75 lie on the Cytoplasmic side of the membrane. A helical transmembrane segment spans residues Gly-76 to Thr-98. Topologically, residues Ser-99–Asp-102 are periplasmic. Residues Gly-103–Leu-125 traverse the membrane as a helical segment. Residues Arg-126 to Pro-145 lie on the Cytoplasmic side of the membrane. Residues Ile-146–Gly-168 traverse the membrane as a helical segment. Topologically, residues Ala-169–His-182 are periplasmic. The helical transmembrane segment at Ile-183 to Thr-205 threads the bilayer. Over Trp-206–Lys-211 the chain is Cytoplasmic. A helical transmembrane segment spans residues Ala-212–Phe-234. Residues Asn-235–Asp-260 lie on the Periplasmic side of the membrane. The helical transmembrane segment at Pro-261–Met-283 threads the bilayer. The Cytoplasmic segment spans residues Arg-284–Thr-302. Residues Gly-303–Ala-325 traverse the membrane as a helical segment. The Periplasmic portion of the chain corresponds to Asn-326–Asn-349. Residues Ala-350–Val-372 traverse the membrane as a helical segment. Residues Ala-373–Glu-401 lie on the Cytoplasmic side of the membrane. Residues Leu-402–Glu-424 form a helical membrane-spanning segment. Residues Asn-425–Asn-427 are Periplasmic-facing. A helical membrane pass occupies residues Ile-428–Ser-450. Residues Met-451 to Ala-461 are Cytoplasmic-facing. A helical membrane pass occupies residues Met-462–Val-484. Residues Gln-485 to Ile-493 lie on the Periplasmic side of the membrane. Residues Phe-494–Ala-516 traverse the membrane as a helical segment. At Thr-517–His-549 the chain is on the cytoplasmic side.

It belongs to the sodium:solute symporter (SSF) (TC 2.A.21) family.

It localises to the cell inner membrane. Transports acetate. This is Cation/acetate symporter ActP (actP) from Shigella flexneri.